A 461-amino-acid polypeptide reads, in one-letter code: Early growth response factor homolog 1 (461 aa).

3 disordered regions span residues 1–25 (MALHEPPSKLNRHSHSNLLKPPSLN), 96–152 (TLMP…ELTL), and 232–308 (DVLH…YSSL). Polar residues-rich tracts occupy residues 96–105 (TLMPAPSSSY), 129–144 (GSNSFGVPRMTNGNSK), 249–265 (LGSSLQNEHPQSNSRPS), and 272–291 (QRTNTSASLTRSMDHSSMSP). A compositionally biased stretch (low complexity) spans 299-308 (YSNSASYSSL). 3 consecutive C2H2-type zinc fingers follow at residues 374 to 398 (YKCPRDGCDRRFSRSDELTRHIRIH), 404 to 426 (FQCRICMRAFSRSDHLTTHVRTH), and 432 to 454 (FSCDICGRKFARSDERKRHTKVH).

It belongs to the EGR C2H2-type zinc-finger protein family. Expressed in sheath cells and distal tip cells of the somatic gonad, as well as in the intestine and sperm (at protein level). Expression not observed in oocytes (at protein level).

The protein localises to the nucleus. It is found in the cytoplasm. It localises to the perinuclear region. Sequence-specific DNA-binding transcription factor. Plays a role in oocyte development, acting cell-autonomously in the somatic gonad. Involved in negative regulation of oocyte MAPK activation and inhibits oocyte maturation and ovulation. The chain is Early growth response factor homolog 1 from Caenorhabditis elegans.